The chain runs to 282 residues: Undecaprenyl-diphosphatase (282 aa).

A run of 8 helical transmembrane segments spans residues 1–21, 40–60, 89–109, 112–132, 153–173, 196–216, 228–248, and 258–278; these read MNLF…FLPI, GAAF…IYFA, WMIA…KHEI, VLRS…VLVV, LSWT…IPGS, FSFL…LYQT, LNLA…IAFL, and GIFI…IGTG.

It belongs to the UppP family.

The protein resides in the cell inner membrane. The catalysed reaction is di-trans,octa-cis-undecaprenyl diphosphate + H2O = di-trans,octa-cis-undecaprenyl phosphate + phosphate + H(+). Catalyzes the dephosphorylation of undecaprenyl diphosphate (UPP). Confers resistance to bacitracin. This is Undecaprenyl-diphosphatase from Chlorobaculum tepidum (strain ATCC 49652 / DSM 12025 / NBRC 103806 / TLS) (Chlorobium tepidum).